The sequence spans 192 residues: Thiamine transporter ThiT (192 aa).

A run of 6 helical transmembrane segments spans residues 10 to 30, 31 to 51, 57 to 77, 81 to 101, 123 to 143, and 164 to 184; these read LIEIAIMTAAAVILDIVSGMF, LSMPQGGSVSIMMIPIFLISF, AGLTTGLLTGLVQIAIGNLFA, VQLLLDYIVAFAAIGISGCFA, AVFIGSLLRYAAHVISGAVFF, and YMVPSFIICAIVLCLLFMTAP.

The protein belongs to the vitamin uptake transporter (VUT/ECF) (TC 2.A.88) family. Thiamine transporter subfamily. As to quaternary structure, forms a stable energy-coupling factor (ECF) transporter complex composed of a membrane-embedded substrate-binding protein (S component), two ATP-binding proteins (A components) and a transmembrane protein (T component).

The protein resides in the cell membrane. Functionally, probably a thiamine-binding protein that interacts with the energy-coupling factor (ECF) ABC-transporter complex. Unlike classic ABC transporters this ECF transporter provides the energy necessary to transport a number of different substrates. The substrates themselves are bound by transmembrane, not extracytoplasmic soluble proteins. This is Thiamine transporter ThiT (thiT) from Bacillus subtilis (strain 168).